Here is a 191-residue protein sequence, read N- to C-terminus: Protein YceI (191 aa).

The signal sequence occupies residues 1-22; that stretch reads MKKSLLGLTFASLMFSAGSAVA.

The protein belongs to the UPF0312 family. Type 1 subfamily.

The protein localises to the periplasm. The chain is Protein YceI from Escherichia coli O6:H1 (strain CFT073 / ATCC 700928 / UPEC).